A 625-amino-acid chain; its full sequence is tRNA uridine 5-carboxymethylaminomethyl modification enzyme MnmG (625 aa).

FAD contacts are provided by residues 9–14 (GGGHAG), valine 121, and serine 177. 271–285 (GPRYCPSIEDKVNRF) contributes to the NAD(+) binding site. An FAD-binding site is contributed by glutamine 368.

The protein belongs to the MnmG family. In terms of assembly, homodimer. Heterotetramer of two MnmE and two MnmG subunits. The cofactor is FAD.

It is found in the cytoplasm. NAD-binding protein involved in the addition of a carboxymethylaminomethyl (cmnm) group at the wobble position (U34) of certain tRNAs, forming tRNA-cmnm(5)s(2)U34. This chain is tRNA uridine 5-carboxymethylaminomethyl modification enzyme MnmG, found in Aliarcobacter butzleri (strain RM4018) (Arcobacter butzleri).